A 199-amino-acid polypeptide reads, in one-letter code: Phosphoserine phosphatase RsbX (199 aa).

The region spanning 11-198 (QTLVYQLNKE…DDLTYILGQL (188 aa)) is the PPM-type phosphatase domain.

It carries out the reaction O-phospho-L-serine + H2O = L-serine + phosphate. The catalysed reaction is O-phospho-D-serine + H2O = D-serine + phosphate. Its function is as follows. Negative regulator of sigma-B activity. Dephosphorylates RsbS. Plays a role both in maintaining low sigma-B activity during growth and in reestablishing prestress sigma-B activity after induction. Could have a negative feedback role by indirectly communicating sigma-B protein levels. This Bacillus subtilis (strain 168) protein is Phosphoserine phosphatase RsbX (rsbX).